The primary structure comprises 1367 residues: MAP3K epsilon protein kinase 2 (1367 aa).

In terms of domain architecture, Protein kinase spans 20-274 (YMLGDEIGKG…AKTLLSHPWI (255 aa)). HEAT repeat units lie at residues 25 to 62 (EIGKGAYGRVYIGLDLENGDFVAIKQVSLENIGQEDLN) and 86 to 125 (LKTKTHLHIILEYVENGSLANIIKPNKFGPFPESLVTVYI). Residues 26 to 34 (IGKGAYGRV) and Lys-49 each bind ATP. Asp-144 (proton acceptor) is an active-site residue. Residues 218–256 (PYYDLQPMPALYRIVQDDTPPIPDSLSPDITDFLRLCFK) form an HEAT 3 repeat. Disordered regions lie at residues 285 to 422 (LRHS…GRRN) and 437 to 513 (SSHS…VADG). The span at 293–306 (YMKETDSSSEKDAE) shows a compositional bias: basic and acidic residues. Over residues 351–363 (LGEEGTDSEDDIN) the composition is skewed to acidic residues. A compositionally biased stretch (polar residues) spans 378–396 (RQSGTCSISSDAKGTSQDV). Basic and acidic residues-rich tracts occupy residues 397-408 (LENHEKYDRDEI) and 475-491 (SLHDLFHPLDKVPEGKT). Polar residues predominate over residues 492–507 (NEASTSTPTANVNQGD). HEAT repeat units lie at residues 538 to 576 (SQDGGDLFRLMMGVLKDDVLNIDDLVFDEKVPPENLFPL), 577 to 614 (QAVEFSRLVSSLRPDESEDAIVTSSLKLVAMFRQRPGQ), 633 to 658 (IPKSRVICAVLQLINEIVKDNTDFLE), 659 to 700 (NACL…SSPL), and 704 to 742 (MFISCRGIPVLVGFLEADYAKHREMVHLAIDGMWQVFKL). The segment at 792–860 (PRARSGQLDP…LHPDGDRPRL (69 aa)) is disordered. 2 stretches are compositionally biased toward polar residues: residues 799 to 814 (LDPNNPIFSQRETSPS) and 835 to 845 (ALTSNSQSSDV). Residues 846–859 (HQPDALHPDGDRPR) are compositionally biased toward basic and acidic residues. 10 HEAT repeats span residues 850–888 (ALHPDGDRPRLSSVVADATEDVIQQHRISLSANRTSTDK), 906–943 (DQVRPLLSLLEKEPPSRKISGQLDYVKHIAGIERHESR), 1045–1066 (DYLEKVADLLLEFARAETTVKS), 1067–1105 (YMCSQSLLSRLFQMFNRVEPPILLKILECTNHLSTDPNC), 1112–1150 (ADAIKQLIPNLELKEGPLVYQIHHEVLSALFNLCKINKR), 1154–1191 (QAAENGIIPHLMLFVMSDSPLKQYALPLLCDMAHASRN), 1196–1236 (LRAH…KVEQ), 1257–1280 (RHFVHILEPFLKIITKSSSINKTL), 1281–1317 (ALNGLTPLLIARLDHQDAIARLNLLKLIKAVYEKHPK), and 1347–1367 (QVLVKQMATSLLKALHINTIL).

This sequence belongs to the protein kinase superfamily. Ser/Thr protein kinase family. Post-translationally, autophosphorylated. Expressed in both the sporophytic and the gametophytic tissues, especially in dividing cells. Mostly present in flower buds and mature flowers. Also accumulates in embryos and in roots.

The protein resides in the cytoplasm. It is found in the cytoskeleton. The protein localises to the microtubule organizing center. Its subcellular location is the nucleus. It localises to the nucleolus. The protein resides in the cell membrane. The enzyme catalyses L-seryl-[protein] + ATP = O-phospho-L-seryl-[protein] + ADP + H(+). The catalysed reaction is L-threonyl-[protein] + ATP = O-phospho-L-threonyl-[protein] + ADP + H(+). Its function is as follows. Serine/threonine-protein kinase involved in the spatial and temporal control system organizing cortical activities in mitotic and postmitotic cells. Required for the normal functioning of the plasma membrane in developing pollen. Involved in the regulation of cell expansion and embryo development. This is MAP3K epsilon protein kinase 2 from Arabidopsis thaliana (Mouse-ear cress).